A 475-amino-acid polypeptide reads, in one-letter code: Aspartyl/glutamyl-tRNA(Asn/Gln) amidotransferase subunit B (475 aa).

The protein belongs to the GatB/GatE family. GatB subfamily. As to quaternary structure, heterotrimer of A, B and C subunits.

The catalysed reaction is L-glutamyl-tRNA(Gln) + L-glutamine + ATP + H2O = L-glutaminyl-tRNA(Gln) + L-glutamate + ADP + phosphate + H(+). It carries out the reaction L-aspartyl-tRNA(Asn) + L-glutamine + ATP + H2O = L-asparaginyl-tRNA(Asn) + L-glutamate + ADP + phosphate + 2 H(+). In terms of biological role, allows the formation of correctly charged Asn-tRNA(Asn) or Gln-tRNA(Gln) through the transamidation of misacylated Asp-tRNA(Asn) or Glu-tRNA(Gln) in organisms which lack either or both of asparaginyl-tRNA or glutaminyl-tRNA synthetases. The reaction takes place in the presence of glutamine and ATP through an activated phospho-Asp-tRNA(Asn) or phospho-Glu-tRNA(Gln). In Pelodictyon phaeoclathratiforme (strain DSM 5477 / BU-1), this protein is Aspartyl/glutamyl-tRNA(Asn/Gln) amidotransferase subunit B.